Reading from the N-terminus, the 345-residue chain is GTPase Obg (345 aa).

Positions 1-158 constitute an Obg domain; the sequence is MFIDSVKITL…RLVRLELKLI (158 aa). Positions 159 to 339 constitute an OBG-type G domain; it reads ADVGLVGFPN…LKFMLLEEIK (181 aa). GTP is bound by residues 165 to 172, 190 to 194, 212 to 215, 280 to 283, and 320 to 322; these read GFPNVGKS, FTTLT, DIPG, SKSD, and SSL. Mg(2+)-binding residues include serine 172 and threonine 192.

Belongs to the TRAFAC class OBG-HflX-like GTPase superfamily. OBG GTPase family. Monomer. It depends on Mg(2+) as a cofactor.

Its subcellular location is the cytoplasm. Its function is as follows. An essential GTPase which binds GTP, GDP and possibly (p)ppGpp with moderate affinity, with high nucleotide exchange rates and a fairly low GTP hydrolysis rate. Plays a role in control of the cell cycle, stress response, ribosome biogenesis and in those bacteria that undergo differentiation, in morphogenesis control. The sequence is that of GTPase Obg from Campylobacter jejuni subsp. jejuni serotype O:6 (strain 81116 / NCTC 11828).